Here is a 500-residue protein sequence, read N- to C-terminus: Pentatricopeptide repeat-containing protein At1g05750, chloroplastic (500 aa).

Residues 1-54 (MGLLPVVGITSPALITHKNHANPKIQRHNQSTSETTVSWTSRINLLTRNGRLAE) constitute a chloroplast transit peptide. PPR repeat units follow at residues 35-69 (TTVS…GVEP), 70-106 (NHIT…GLDR), 108-138 (HVMV…MEDK), 139-173 (NSVT…DLIS), 174-204 (WTAM…GVKP), 205-239 (DYVA…DFKN), 240-270 (NVRV…MEKR), 271-305 (TVVS…GFKP), 306-336 (DAVT…MKCD), and 342-376 (RIEH…PNEV). The segment at 377–453 (VIGSLLAACS…QPGFSSIEID (77 aa)) is type E motif. A type E(+) motif region spans residues 454 to 484 (DCMHVFMAGDNAHVETTYIREVLELISSDLR).

The protein belongs to the PPR family. PCMP-E subfamily.

The protein localises to the plastid. It localises to the chloroplast. This is Pentatricopeptide repeat-containing protein At1g05750, chloroplastic (PDE247) from Arabidopsis thaliana (Mouse-ear cress).